A 229-amino-acid polypeptide reads, in one-letter code: Sodium channel modifier 1 (229 aa).

Ser-2 carries the phosphoserine modification. The Bipartite nuclear localization signal signature appears at 4–20 (KREGDDWSQLNVLKKRR). The segment at 42–74 (FACAICPHRPVLDTLAMLTAHRAGKKHLSSLKL) adopts a Matrin-type zinc-finger fold. A Glycyl lysine isopeptide (Lys-Gly) (interchain with G-Cter in SUMO2) cross-link involves residue Lys-67. Disordered stretches follow at residues 80–105 (QTGKGTEQNPRQQNELKTESKTEAPL) and 128–187 (RRKH…TKRR). The span at 82 to 92 (GKGTEQNPRQQ) shows a compositional bias: polar residues. Residues 157 to 171 (ISKEPEPRERSDAKE) show a composition bias toward basic and acidic residues. Phosphoserine occurs at positions 182 and 218. The tract at residues 187 to 229 (RVLNHYLTLRSSGWVPDGRGRWIKDENVEFDSDEEEPPDLPLD) is required for interaction with LUC7L2.

In terms of assembly, component of the minor spliceosome. Within this complex, interacts with RNF113A, as well as with SF3B1/SF3b155, SF3B2/SF3b145, SF3B3/SF3b130 and CDC5L. May interact with LUC7L2 and SNRNP70.

Its subcellular location is the nucleus. It is found in the nucleoplasm. The protein resides in the nucleus speckle. Functionally, as a component of the minor spliceosome, involved in the splicing of U12-type introns in pre-mRNAs. Plays a role in the regulation of primary cilia length and Hedgehog signaling. The protein is Sodium channel modifier 1 (Scnm1) of Mus musculus (Mouse).